We begin with the raw amino-acid sequence, 1604 residues long: E3 ubiquitin-protein ligase HECW1 (1604 aa).

The C2 domain occupies 182–318 (SAAPIFKGIG…LERHAIGDRV (137 aa)). Disordered stretches follow at residues 350-539 (DEEI…CSLP), 572-604 (PSAQ…LSEV), 642-667 (GIGA…QQGA), and 727-826 (STVF…TIDE). A compositionally biased stretch (polar residues) spans 362–380 (SAETQDSIMNSMVGNSNGE). Residues 387-396 (EFCKDAKPES) are compositionally biased toward basic and acidic residues. The segment covering 398-412 (SEGNGVNSSENQNQE) has biased composition (polar residues). Composition is skewed to acidic residues over residues 435-444 (APEEPGELQD) and 458-469 (EVAEGLPLDEDS). Over residues 494 to 505 (GAREEEMQKGKD) the composition is skewed to basic and acidic residues. The segment covering 580-589 (TEEEDGLEEE) has biased composition (acidic residues). Positions 590 to 601 (STLKESSEKDGL) are enriched in basic and acidic residues. Composition is skewed to polar residues over residues 654 to 667 (STGS…QQGA), 748 to 762 (DSVQ…STNG), and 803 to 812 (HNSQPISQLP). The WW 1 domain maps to 826–859 (EPLPPNWEARIDSHGRVFYVDHINRTTTWQRPSM). Position 871 is a phosphoserine (Ser871). The stretch at 871 to 898 (SVHQMEQLNRRYQNIQRTMATERAEEDS) forms a coiled coil. Residues 890–936 (ATERAEEDSGNQNSEQIPDGGGGGGGGSDSEAESSQSSLDLRREGSL) are disordered. Residues 908–917 (DGGGGGGGGS) show a composition bias toward gly residues. Phosphoserine is present on residues Ser935 and Ser937. The WW 2 domain maps to 1016–1049 (LELPRGWEIKTDHQGKSFFVDHNSRATTFIDPRI). An HECT domain is found at 1269 to 1604 (SRKELQRNKL…VEETSTFGLE (336 aa)). Catalysis depends on Cys1572, which acts as the Glycyl thioester intermediate.

Interacts with DVL1 and SSR3. Predominantly expressed in neurons of the spinal cord.

The protein localises to the cytoplasm. The catalysed reaction is S-ubiquitinyl-[E2 ubiquitin-conjugating enzyme]-L-cysteine + [acceptor protein]-L-lysine = [E2 ubiquitin-conjugating enzyme]-L-cysteine + N(6)-ubiquitinyl-[acceptor protein]-L-lysine.. It functions in the pathway protein modification; protein ubiquitination. In terms of biological role, E3 ubiquitin-protein ligase that mediates ubiquitination and subsequent degradation of DVL1. The sequence is that of E3 ubiquitin-protein ligase HECW1 (Hecw1) from Mus musculus (Mouse).